We begin with the raw amino-acid sequence, 241 residues long: Phosphoribosylaminoimidazole-succinocarboxamide synthase (241 aa).

It belongs to the SAICAR synthetase family.

The enzyme catalyses 5-amino-1-(5-phospho-D-ribosyl)imidazole-4-carboxylate + L-aspartate + ATP = (2S)-2-[5-amino-1-(5-phospho-beta-D-ribosyl)imidazole-4-carboxamido]succinate + ADP + phosphate + 2 H(+). It participates in purine metabolism; IMP biosynthesis via de novo pathway; 5-amino-1-(5-phospho-D-ribosyl)imidazole-4-carboxamide from 5-amino-1-(5-phospho-D-ribosyl)imidazole-4-carboxylate: step 1/2. This chain is Phosphoribosylaminoimidazole-succinocarboxamide synthase, found in Caldivirga maquilingensis (strain ATCC 700844 / DSM 13496 / JCM 10307 / IC-167).